The following is a 211-amino-acid chain: Protein-L-isoaspartate O-methyltransferase (211 aa).

Ser60 is an active-site residue.

The protein belongs to the methyltransferase superfamily. L-isoaspartyl/D-aspartyl protein methyltransferase family.

Its subcellular location is the cytoplasm. The enzyme catalyses [protein]-L-isoaspartate + S-adenosyl-L-methionine = [protein]-L-isoaspartate alpha-methyl ester + S-adenosyl-L-homocysteine. Its function is as follows. Catalyzes the methyl esterification of L-isoaspartyl residues in peptides and proteins that result from spontaneous decomposition of normal L-aspartyl and L-asparaginyl residues. It plays a role in the repair and/or degradation of damaged proteins. This chain is Protein-L-isoaspartate O-methyltransferase, found in Alteromonas mediterranea (strain DSM 17117 / CIP 110805 / LMG 28347 / Deep ecotype).